Here is a 142-residue protein sequence, read N- to C-terminus: Cell division protein SepF (142 aa).

The segment covering 21–31 (ETTTVEEEREE) has biased composition (acidic residues). The disordered stretch occupies residues 21–46 (ETTTVEEEREEQESSHKRQPAISRTN).

Belongs to the SepF family. Homodimer. Interacts with FtsZ.

The protein resides in the cytoplasm. In terms of biological role, cell division protein that is part of the divisome complex and is recruited early to the Z-ring. Probably stimulates Z-ring formation, perhaps through the cross-linking of FtsZ protofilaments. Its function overlaps with FtsA. The protein is Cell division protein SepF of Brevibacillus brevis (strain 47 / JCM 6285 / NBRC 100599).